Reading from the N-terminus, the 294-residue chain is Pyridoxal 5'-phosphate synthase subunit PdxS (294 aa).

A D-ribose 5-phosphate-binding site is contributed by D24. K81 (schiff-base intermediate with D-ribose 5-phosphate) is an active-site residue. G153 serves as a coordination point for D-ribose 5-phosphate. R165 provides a ligand contact to D-glyceraldehyde 3-phosphate. D-ribose 5-phosphate is bound by residues G214 and G235–S236.

It belongs to the PdxS/SNZ family. As to quaternary structure, in the presence of PdxT, forms a dodecamer of heterodimers.

It catalyses the reaction aldehydo-D-ribose 5-phosphate + D-glyceraldehyde 3-phosphate + L-glutamine = pyridoxal 5'-phosphate + L-glutamate + phosphate + 3 H2O + H(+). It functions in the pathway cofactor biosynthesis; pyridoxal 5'-phosphate biosynthesis. Its function is as follows. Catalyzes the formation of pyridoxal 5'-phosphate from ribose 5-phosphate (RBP), glyceraldehyde 3-phosphate (G3P) and ammonia. The ammonia is provided by the PdxT subunit. Can also use ribulose 5-phosphate and dihydroxyacetone phosphate as substrates, resulting from enzyme-catalyzed isomerization of RBP and G3P, respectively. The sequence is that of Pyridoxal 5'-phosphate synthase subunit PdxS from Geobacillus thermodenitrificans (strain NG80-2).